Reading from the N-terminus, the 134-residue chain is Cytochrome c-type biogenesis protein CcmE (134 aa).

The Cytoplasmic portion of the chain corresponds to 1–7; sequence MKRKYRR. The helical; Signal-anchor for type II membrane protein transmembrane segment at 8–28 threads the bilayer; the sequence is LFVVIITLSIFAGSVVLVLGK. Topologically, residues 29–134 are periplasmic; it reads LKNNVSFFYT…MPNKYKTNDL (106 aa). Heme contacts are provided by His-120 and Tyr-124.

It belongs to the CcmE/CycJ family.

The protein localises to the cell inner membrane. In terms of biological role, heme chaperone required for the biogenesis of c-type cytochromes. Transiently binds heme delivered by CcmC and transfers the heme to apo-cytochromes in a process facilitated by CcmF and CcmH. This Ehrlichia ruminantium (strain Welgevonden) protein is Cytochrome c-type biogenesis protein CcmE.